A 233-amino-acid chain; its full sequence is Small ribosomal subunit protein uS2 (233 aa).

This sequence belongs to the universal ribosomal protein uS2 family.

The sequence is that of Small ribosomal subunit protein uS2 from Clostridium novyi (strain NT).